The sequence spans 229 residues: Prolactin (229 aa).

A signal peptide spans 1 to 30 (MDSKGSAQKGSRLLLLLVVSNLLLCQGVVS). The cysteines at positions 34 and 41 are disulfide-linked. Ser56 carries the phosphoserine modification. Residue Asn61 is glycosylated (N-linked (GlcNAc...) asparagine; partial). Ser64 and Ser120 each carry phosphoserine. Cystine bridges form between Cys88/Cys204 and Cys221/Cys229.

Belongs to the somatotropin/prolactin family. Interacts with PRLR.

Its subcellular location is the secreted. Functionally, prolactin acts primarily on the mammary gland by promoting lactation, mammogenesis, mitogenesis and osmoregulation. This chain is Prolactin (PRL), found in Ovis aries (Sheep).